Reading from the N-terminus, the 168-residue chain is 2-oxo-4-hydroxy-4-carboxy-5-ureidoimidazoline decarboxylase (168 aa).

Catalysis depends on H70, which acts as the Proton donor; for OHCU decarboxylase activity. The segment covering 70-79 (HPDLGERTEM) has biased composition (basic and acidic residues). The segment at 70–93 (HPDLGERTEMTDASEAEQASAELD) is disordered. Substrate is bound by residues P71, 83–87 (SEAEQ), and 118–122 (FVMAV).

The protein belongs to the OHCU decarboxylase family.

The catalysed reaction is 5-hydroxy-2-oxo-4-ureido-2,5-dihydro-1H-imidazole-5-carboxylate + H(+) = (S)-allantoin + CO2. It functions in the pathway purine metabolism; urate degradation; (S)-allantoin from urate: step 3/3. Functionally, catalyzes the stereoselective decarboxylation of 2-oxo-4-hydroxy-4-carboxy-5-ureidoimidazoline (OHCU) to (S)-allantoin. The chain is 2-oxo-4-hydroxy-4-carboxy-5-ureidoimidazoline decarboxylase from Haloferax volcanii (strain ATCC 29605 / DSM 3757 / JCM 8879 / NBRC 14742 / NCIMB 2012 / VKM B-1768 / DS2) (Halobacterium volcanii).